The sequence spans 197 residues: dITP/XTP pyrophosphatase (197 aa).

8-13 (TGNAGK) provides a ligand contact to substrate. Mg(2+)-binding residues include E40 and D69. D69 (proton acceptor) is an active-site residue. Substrate-binding positions include S70, 154 to 157 (FGYD), K177, and 182 to 183 (HR).

The protein belongs to the HAM1 NTPase family. As to quaternary structure, homodimer. The cofactor is Mg(2+).

The enzyme catalyses XTP + H2O = XMP + diphosphate + H(+). The catalysed reaction is dITP + H2O = dIMP + diphosphate + H(+). It carries out the reaction ITP + H2O = IMP + diphosphate + H(+). Its function is as follows. Pyrophosphatase that catalyzes the hydrolysis of nucleoside triphosphates to their monophosphate derivatives, with a high preference for the non-canonical purine nucleotides XTP (xanthosine triphosphate), dITP (deoxyinosine triphosphate) and ITP. Seems to function as a house-cleaning enzyme that removes non-canonical purine nucleotides from the nucleotide pool, thus preventing their incorporation into DNA/RNA and avoiding chromosomal lesions. The polypeptide is dITP/XTP pyrophosphatase (rdgB) (Escherichia coli O157:H7).